A 422-amino-acid chain; its full sequence is MGRRGALLCLLPLLRAAERPEGRADEPGLEAALAGPNASHFFWSNYSFSDWQNFVGRRRYGAESQNPTVKALLVVAYSFIIVFSLFGNVLVCHVIFKNQRMRSATSLFIVNLAVADILITLLNTPFTLVRFVNSTWVFGKGMCHVSRFAQYCSLHVSALTLTAIAVDRHQVIMHPLKPRISITKGVIYITVIWTMATFFSLPHAICQKLFTFKYSEDIVRSLCLPDFPEPADLFWKYLDLATFILLYILPLLIISVAYARVAKKLWLCNTIGDVTTEQYLALRRKKKKTIKMLMLVVVLFALCWFPLNCYVLLLSSKVIHTNNALYFAFHWFAMSSTCYNPFIYCWLNENFRIELKALLSMCQRLPKPQEERPPSPVPSFRVAWTEKSNGRRVPPANNLLLSSHLHSGKTDLSSVEPIVAMS.

Positions 1-16 (MGRRGALLCLLPLLRA) are cleaved as a signal peptide. Residues 17–70 (AERPEGRADEPGLEAALAGPNASHFFWSNYSFSDWQNFVGRRRYGAESQNPTVK) lie on the Extracellular side of the membrane. N37 and N45 each carry an N-linked (GlcNAc...) asparagine glycan. The chain crosses the membrane as a helical span at residues 71–91 (ALLVVAYSFIIVFSLFGNVLV). The Cytoplasmic portion of the chain corresponds to 92-106 (CHVIFKNQRMRSATS). The helical transmembrane segment at 107–128 (LFIVNLAVADILITLLNTPFTL) threads the bilayer. Residues 129-144 (VRFVNSTWVFGKGMCH) lie on the Extracellular side of the membrane. An N-linked (GlcNAc...) asparagine glycan is attached at N133. The helical transmembrane segment at 145–166 (VSRFAQYCSLHVSALTLTAIAV) threads the bilayer. Residues 167–185 (DRHQVIMHPLKPRISITKG) are Cytoplasmic-facing. Residues 186-207 (VIYITVIWTMATFFSLPHAICQ) form a helical membrane-spanning segment. The Extracellular segment spans residues 208–237 (KLFTFKYSEDIVRSLCLPDFPEPADLFWKY). A helical membrane pass occupies residues 238-259 (LDLATFILLYILPLLIISVAYA). The Cytoplasmic segment spans residues 260–292 (RVAKKLWLCNTIGDVTTEQYLALRRKKKKTIKM). The helical transmembrane segment at 293–314 (LMLVVVLFALCWFPLNCYVLLL) threads the bilayer. Over 315–326 (SSKVIHTNNALY) the chain is Extracellular. The chain crosses the membrane as a helical span at residues 327-347 (FAFHWFAMSSTCYNPFIYCWL). Topologically, residues 348–422 (NENFRIELKA…SSVEPIVAMS (75 aa)) are cytoplasmic.

It belongs to the G-protein coupled receptor 1 family.

Its subcellular location is the cell membrane. Its function is as follows. G-protein coupled receptor for PEN, a neuropeptide produced from the precursor protein, proSAAS (encoded by PCSK1N). Acts through a G(i)- and G(q)-alpha-alpha-mediated pathway in response to PEN. Plays a role in food intake and body weight regulation. May contribute to the regulation of anxiety-related behaviors. This Canis lupus familiaris (Dog) protein is G-protein coupled receptor 83 (GPR83).